The primary structure comprises 571 residues: DExH-box ATP-dependent RNA helicase DExH16, mitochondrial (571 aa).

The transit peptide at 1-56 directs the protein to the mitochondrion; sequence MAYSVVRLRKVSALGISRVLQADKGSLWRFHFEPEFGDLLRLGVLTRNYRKNSGSP. Positions 83–212 constitute a Helicase ATP-binding domain; sequence IARKKKRKVI…HLCGDPAVVP (130 aa). An ATP-binding site is contributed by 96 to 103; the sequence is GPTNSGKT. The short motif at 176–179 is the DEIH box; degenerate element; that stretch reads DEIQ. Positions 213 to 399 constitute a Helicase C-terminal domain; the sequence is LVEDILKVTG…GLFPTFDLLS (187 aa).

It belongs to the DExH box helicase family. In terms of assembly, homodimer; in free form. Component of the mitochondrial degradosome (mtEXO) complex which is a heteropentamer containing 2 copies of SUPV3L1 and 3 copies of PNPT1. Requires Mg(2+) as cofactor. Mn(2+) serves as cofactor. As to expression, weakly expressed.

Its subcellular location is the nucleus. The protein resides in the mitochondrion matrix. It is found in the mitochondrion nucleoid. The enzyme catalyses ATP + H2O = ADP + phosphate + H(+). With respect to regulation, activated by the presence of mitochondrial RNA. Major helicase player in mitochondrial RNA metabolism. Component of the mitochondrial degradosome (mtEXO) complex, that degrades 3' overhang double-stranded RNA with a 3'-to-5' directionality in an ATP-dependent manner. ATPase and ATP-dependent multisubstrate helicase, able to unwind double-stranded (ds) DNA and RNA, and RNA/DNA heteroduplexes in the 5'-to-3' direction. Plays a role in the RNA surveillance system in mitochondria; regulates the stability of mature mRNAs, the removal of aberrantly formed mRNAs and the rapid degradation of non coding processing intermediates. Required during pollen development. This Arabidopsis thaliana (Mouse-ear cress) protein is DExH-box ATP-dependent RNA helicase DExH16, mitochondrial.